We begin with the raw amino-acid sequence, 1292 residues long: DNA-directed RNA polymerase subunit beta' (1292 aa).

The Zn(2+) site is built by Cys-70, Cys-72, Cys-85, and Cys-88. Mg(2+) is bound by residues Asp-532, Asp-534, and Asp-536. The Zn(2+) site is built by Cys-911, Cys-987, Cys-994, and Cys-997.

Belongs to the RNA polymerase beta' chain family. In terms of assembly, the RNAP catalytic core consists of 2 alpha, 1 beta, 1 beta' and 1 omega subunit. When a sigma factor is associated with the core the holoenzyme is formed, which can initiate transcription. It depends on Mg(2+) as a cofactor. Zn(2+) serves as cofactor.

It catalyses the reaction RNA(n) + a ribonucleoside 5'-triphosphate = RNA(n+1) + diphosphate. Functionally, DNA-dependent RNA polymerase catalyzes the transcription of DNA into RNA using the four ribonucleoside triphosphates as substrates. The sequence is that of DNA-directed RNA polymerase subunit beta' from Mycoplasma genitalium (strain ATCC 33530 / DSM 19775 / NCTC 10195 / G37) (Mycoplasmoides genitalium).